The primary structure comprises 651 residues: Macrolide export ATP-binding/permease protein MacB (651 aa).

Residues 2 to 239 (IEIVNVTKTY…PQMPQGGMEA (238 aa)) enclose the ABC transporter domain. 38 to 45 (GASGSGKS) contributes to the ATP binding site. 4 helical membrane passes run 269–289 (FLSV…MALG), 532–552 (IAAI…LVSV), 589–609 (IIGI…AGWA), and 614–634 (MFSV…FGLW).

It belongs to the ABC transporter superfamily. Macrolide exporter (TC 3.A.1.122) family. As to quaternary structure, homodimer.

The protein localises to the cell inner membrane. Functionally, non-canonical ABC transporter that contains transmembrane domains (TMD), which form a pore in the inner membrane, and an ATP-binding domain (NBD), which is responsible for energy generation. Confers resistance against macrolides. The polypeptide is Macrolide export ATP-binding/permease protein MacB (Chlorobaculum tepidum (strain ATCC 49652 / DSM 12025 / NBRC 103806 / TLS) (Chlorobium tepidum)).